A 207-amino-acid polypeptide reads, in one-letter code: METKEKVQIDWKVVFKLGLILFVISAVAACALALTNYVTAGTIEEMNVQTNTVARQEVLPKAADFEAVPAKDVEKIASEIGMEKPEELLEVYIGKSNGEVVGYTVKTGPTSGYAGEVQVLTGISADGVITGITIIKSNETPGLGAKASGVWNDQFTGKSAKEELVVVKGTTKEGSNEIQAITGSTITSKAVTSGVNMSIQVYQNLSK.

The helical transmembrane segment at 18–38 (GLILFVISAVAACALALTNYV) threads the bilayer. Threonine 185 is modified (FMN phosphoryl threonine).

Belongs to the RnfG family. As to quaternary structure, the complex is composed of six subunits: RnfA, RnfB, RnfC, RnfD, RnfE and RnfG. It depends on FMN as a cofactor.

It is found in the cell membrane. It catalyses the reaction 2 reduced [2Fe-2S]-[ferredoxin] + Na(+)(in) + NAD(+) + H(+) = 2 oxidized [2Fe-2S]-[ferredoxin] + Na(+)(out) + NADH. Part of a membrane-bound complex that couples electron transfer with translocation of ions across the membrane. Couples electron transfer from reduced ferredoxin to NAD(+) with electrogenic movement of Na(+) out of the cell. Involved in caffeate respiration. This Acetobacterium woodii (strain ATCC 29683 / DSM 1030 / JCM 2381 / KCTC 1655 / WB1) protein is Na(+)-translocating ferredoxin:NAD(+) oxidoreductase complex subunit G.